Reading from the N-terminus, the 712-residue chain is Lactoperoxidase (712 aa).

Positions 1 to 22 are cleaved as a signal peptide; sequence MWVCLQLPVFLASVTLFEVAAS. Positions 23–100 are excised as a propeptide; it reads DTIAQAASTT…WEESLKRLRR (78 aa). An N-linked (GlcNAc...) asparagine glycan is attached at N106. 4 disulfides stabilise this stretch: C123/C284, C132/C145, C246/C256, and C250/C274. An N-linked (GlcNAc...) asparagine glycan is attached at N212. D225 is a binding site for heme b. Catalysis depends on H226, which acts as the Proton acceptor. D227 contacts Ca(2+). The Ca(2+) site is built by T301, F303, D305, and S307. Position 315 is a phosphoserine (S315). N322 and N358 each carry an N-linked (GlcNAc...) asparagine glycan. C354 and C365 form a disulfide bridge. E375 lines the heme b pocket. N449 carries an N-linked (GlcNAc...) asparagine glycan. H468 contributes to the heme b binding site. Y482 is modified (3'-nitrotyrosine). 2 cysteine pairs are disulfide-bonded: C573–C630 and C671–C696.

The protein belongs to the peroxidase family. XPO subfamily. The cofactor is Ca(2+). Heme b is required as a cofactor. Mammary gland; milk.

It localises to the secreted. It is found in the cytoplasm. The enzyme catalyses 2 a phenolic donor + H2O2 = 2 a phenolic radical donor + 2 H2O. The catalysed reaction is thiocyanate + H2O2 + H(+) = hypothiocyanous acid + H2O. It catalyses the reaction iodide + H2O2 = hypoiodite + H2O. Functionally, heme-containing oxidoreductase which catalyzes the conversion of thiocyanate (SCN(-)) into antimicrobial agent hypothiocyanous acid (OSCN(-)) in the presence of hydrogen peroxide (H2O2). Also involved in the conversion of iodide (I(-)) into hypoiodite (IO(-)) in the presence of H2O2. Responsible for the inactivation of a wide range of micro-organisms and hence, important component of defense mechanism. The lactoperoxidase-SCN(-)-H2O2 system shows antibacterial properties against some streptococci strains. The lactoperoxidase-I(-)-H2O2 system shows antibacterial properties against E.coli. May protect the udder from infection and may promote growth in newborns. May be implicated in airway host defense against infection. May contribute to maintaining an appropriate H2O2 cellular level, therefore protecting cells from H2O2-caused injuries and inflammation. This Bos taurus (Bovine) protein is Lactoperoxidase (LPO).